The following is a 390-amino-acid chain: MKRQALAAMIASLFALAACGGEPAAQAPAETPAAAAEAASSAAQTAAETPSGELPVIDAVTTHAPEVPPAIDRDYPAKVRVKMETVEKTMTMEDGVEYRYWTFDGDVPGRMIRVREGDTVEVEFSNNPSSTVPHNVDFHAATGQGGGAAATFTAPGRTSTFSFKALQPGLYIYHCAVAPVGMHIANGMYGLILVEPKEGLPKVDKEFYIVQGDFYTKGKKGAQGLQPFDMDKAVAEQPEYVVFNGHVGAIAGDNALKAKAGETVRMYVGNGGPNLVSSFHVIGEIFDKVYVEGGKLINENVQSTIVPAGGSAIVEFKVDIPGSYTLVDHSIFRAFNKGALGQLKVEGAENPEIMTQKLSDTAYAGNGAAPAASAPAASAPAASASEKSVY.

The first 18 residues, Met-1–Ala-18, serve as a signal peptide directing secretion. Cys-19 carries N-palmitoyl cysteine lipidation. The S-diacylglycerol cysteine moiety is linked to residue Cys-19. A disordered region spans residues Glu-30–Ser-51. Plastocyanin-like domains follow at residues Trp-101–Glu-195 and Gly-245–Glu-346. The Cu cation site is built by His-134, His-139, His-174, Cys-175, His-183, and Met-188. His-139 lines the substrate pocket. His-280 contributes to the substrate binding site. His-329 serves as a coordination point for Cu cation. The segment at Gly-367–Tyr-390 is disordered. The segment covering Ala-368–Tyr-390 has biased composition (low complexity). Repeat copies occupy residues Ala-371 to Pro-375, Ala-376 to Pro-380, and Ala-381 to Ser-385. Residues Ala-371 to Ser-385 are 3 X 5 AA tandem repeats of A-A-S-A-P.

It belongs to the multicopper oxidase family. As to quaternary structure, homotrimer. Cu(+) is required as a cofactor. It depends on Cu(2+) as a cofactor.

The protein localises to the cell outer membrane. The catalysed reaction is nitric oxide + Fe(III)-[cytochrome c] + H2O = Fe(II)-[cytochrome c] + nitrite + 2 H(+). Its function is as follows. Catalyzes the reduction of nitrite to nitric oxide (NO). It could be essential for growth and survival in oxygen-depleted environments. The protein is Copper-containing nitrite reductase (aniA) of Neisseria meningitidis serogroup B (strain ATCC BAA-335 / MC58).